The sequence spans 482 residues: Glutamate--tRNA ligase (482 aa).

The 'HIGH' region motif lies at 9–19 (PSPTGPIHVGN). Positions 106, 108, 133, and 135 each coordinate Zn(2+). Positions 250–254 (KLSKR) match the 'KMSKS' region motif. ATP is bound at residue Lys-253.

This sequence belongs to the class-I aminoacyl-tRNA synthetase family. Glutamate--tRNA ligase type 1 subfamily. As to quaternary structure, monomer. It depends on Zn(2+) as a cofactor.

It localises to the cytoplasm. The catalysed reaction is tRNA(Glu) + L-glutamate + ATP = L-glutamyl-tRNA(Glu) + AMP + diphosphate. Functionally, catalyzes the attachment of glutamate to tRNA(Glu) in a two-step reaction: glutamate is first activated by ATP to form Glu-AMP and then transferred to the acceptor end of tRNA(Glu). This chain is Glutamate--tRNA ligase, found in Symbiobacterium thermophilum (strain DSM 24528 / JCM 14929 / IAM 14863 / T).